A 342-amino-acid chain; its full sequence is Heat-inducible transcription repressor HrcA (342 aa).

Belongs to the HrcA family.

Negative regulator of class I heat shock genes (grpE-dnaK-dnaJ and groELS operons). Prevents heat-shock induction of these operons. This chain is Heat-inducible transcription repressor HrcA, found in Geobacter sulfurreducens (strain ATCC 51573 / DSM 12127 / PCA).